The primary structure comprises 125 residues: uncharacterized protein (125 aa).

It belongs to the asfivirus H124R family.

Its subcellular location is the virion. This is an uncharacterized protein from Ornithodoros (relapsing fever ticks).